A 357-amino-acid chain; its full sequence is DNA replication and repair protein RecF (357 aa).

31–38 (GQNGAGKT) serves as a coordination point for ATP.

Belongs to the RecF family.

The protein localises to the cytoplasm. Functionally, the RecF protein is involved in DNA metabolism; it is required for DNA replication and normal SOS inducibility. RecF binds preferentially to single-stranded, linear DNA. It also seems to bind ATP. The sequence is that of DNA replication and repair protein RecF from Coxiella burnetii (strain RSA 493 / Nine Mile phase I).